Here is a 767-residue protein sequence, read N- to C-terminus: Phosphoribosylformylglycinamidine synthase subunit PurL (767 aa).

The active site involves H65. ATP contacts are provided by Y68 and K112. Mg(2+) is bound at residue E114. Residues 115 to 118 and R137 each bind substrate; that span reads SHNH. H116 functions as the Proton acceptor in the catalytic mechanism. D138 contributes to the Mg(2+) binding site. Position 262 (Q262) interacts with substrate. D290 lines the Mg(2+) pocket. 334-336 contributes to the substrate binding site; that stretch reads ESQ. ATP is bound by residues D522 and G559. N560 is a binding site for Mg(2+). S562 contacts substrate.

This sequence belongs to the FGAMS family. As to quaternary structure, monomer. Part of the FGAM synthase complex composed of 1 PurL, 1 PurQ and 2 PurS subunits.

The protein localises to the cytoplasm. The catalysed reaction is N(2)-formyl-N(1)-(5-phospho-beta-D-ribosyl)glycinamide + L-glutamine + ATP + H2O = 2-formamido-N(1)-(5-O-phospho-beta-D-ribosyl)acetamidine + L-glutamate + ADP + phosphate + H(+). The protein operates within purine metabolism; IMP biosynthesis via de novo pathway; 5-amino-1-(5-phospho-D-ribosyl)imidazole from N(2)-formyl-N(1)-(5-phospho-D-ribosyl)glycinamide: step 1/2. In terms of biological role, part of the phosphoribosylformylglycinamidine synthase complex involved in the purines biosynthetic pathway. Catalyzes the ATP-dependent conversion of formylglycinamide ribonucleotide (FGAR) and glutamine to yield formylglycinamidine ribonucleotide (FGAM) and glutamate. The FGAM synthase complex is composed of three subunits. PurQ produces an ammonia molecule by converting glutamine to glutamate. PurL transfers the ammonia molecule to FGAR to form FGAM in an ATP-dependent manner. PurS interacts with PurQ and PurL and is thought to assist in the transfer of the ammonia molecule from PurQ to PurL. The sequence is that of Phosphoribosylformylglycinamidine synthase subunit PurL from Renibacterium salmoninarum (strain ATCC 33209 / DSM 20767 / JCM 11484 / NBRC 15589 / NCIMB 2235).